The sequence spans 510 residues: NAD(P) transhydrogenase subunit alpha (510 aa).

Over 1–401 the chain is Cytoplasmic; sequence MRIGIPRERL…EEKCTCSPWR (401 aa). Residues 120–122, Val175, 195–197, Glu238, and Leu257 each bind NAD(+); these read RIS and DTR. Helical transmembrane passes span 402 to 422 and 423 to 443; these read KYAL…VAPK and EFLG…YVVW. At 444 to 452 the chain is on the cytoplasmic side; it reads NVSHALHTP. A helical transmembrane segment spans residues 453–473; it reads LMSVTNAISGIIVVGALLQIG. Topologically, residues 474 to 476 are periplasmic; that stretch reads QGG. A helical transmembrane segment spans residues 477 to 497; sequence WVSFLSFIAVLIASINIFGGF. Residues 498 to 510 are Cytoplasmic-facing; that stretch reads TVTQRMLKMFRKN.

Belongs to the AlaDH/PNT family. Heterodimer of an alpha (PntA) and a beta (PntB) chain. Alpha subunit serves as the dimerization unit.

The protein localises to the cell inner membrane. It catalyses the reaction NAD(+) + NADPH + H(+)(in) = NADH + NADP(+) + H(+)(out). Functionally, the transhydrogenation between NADH and NADP is coupled to respiration and ATP hydrolysis and functions as a proton pump across the membrane. This chain is NAD(P) transhydrogenase subunit alpha (pntA), found in Escherichia coli (strain K12).